The following is a 225-amino-acid chain: Cytidylate kinase (225 aa).

11–19 (GPAAAGKST) is a binding site for ATP.

Belongs to the cytidylate kinase family. Type 1 subfamily.

It is found in the cytoplasm. It carries out the reaction CMP + ATP = CDP + ADP. It catalyses the reaction dCMP + ATP = dCDP + ADP. The protein is Cytidylate kinase of Anoxybacillus flavithermus (strain DSM 21510 / WK1).